A 784-amino-acid chain; its full sequence is LPS-assembly protein LptD (784 aa).

Residues 1–24 (MKKRIPTLLATMIATALYSQQGLA) form the signal peptide. Disulfide bonds link Cys31-Cys724 and Cys173-Cys725.

It belongs to the LptD family. In terms of assembly, component of the lipopolysaccharide transport and assembly complex. Interacts with LptE and LptA. Contains two intramolecular disulfide bonds.

The protein resides in the cell outer membrane. Together with LptE, is involved in the assembly of lipopolysaccharide (LPS) at the surface of the outer membrane. This chain is LPS-assembly protein LptD, found in Shigella dysenteriae serotype 1 (strain Sd197).